A 181-amino-acid polypeptide reads, in one-letter code: Regulator of G-protein signaling 10 (181 aa).

The tract at residues 1 to 35 (MFTRAVSRLSRKRPPSDIHDGDGSSSSGHQSLKST) is disordered. Residues S24 and S41 each carry the phosphoserine modification. Residues 41–156 (SLENLLEDPE…LKSDLFLKPK (116 aa)) enclose the RGS domain. Residue C74 is the site of S-palmitoyl cysteine attachment. Positions 155 to 181 (PKRTEEEEEEPPDAQTAAKRASRIYNT) are disordered. The residue at position 176 (S176) is a Phosphoserine.

As to quaternary structure, interacts with GNAZ, GNAI1 and GNAI3. Associates specifically with the activated, GTP-bound forms of GNAZ and GNAI3.

The protein resides in the cytoplasm. It localises to the cytosol. The protein localises to the nucleus. Its function is as follows. Regulates G protein-coupled receptor signaling cascades, including signaling downstream of the muscarinic acetylcholine receptor CHRM2. Inhibits signal transduction by increasing the GTPase activity of G protein alpha subunits, thereby driving them into their inactive GDP-bound form. Modulates the activity of potassium channels that are activated in response to CHRM2 signaling. Activity on GNAZ is inhibited by palmitoylation of the G-protein. The protein is Regulator of G-protein signaling 10 (Rgs10) of Mus musculus (Mouse).